We begin with the raw amino-acid sequence, 245 residues long: Octanoyltransferase (245 aa).

Positions 54–242 (QNAHEQVWLL…SFEQIFGPII (189 aa)) constitute a BPL/LPL catalytic domain. Residues 93–100 (RGGEFTYH), 173–175 (AIG), and 186–188 (GVS) each bind substrate. Cysteine 204 acts as the Acyl-thioester intermediate in catalysis.

It belongs to the LipB family.

Its subcellular location is the cytoplasm. The catalysed reaction is octanoyl-[ACP] + L-lysyl-[protein] = N(6)-octanoyl-L-lysyl-[protein] + holo-[ACP] + H(+). Its pathway is protein modification; protein lipoylation via endogenous pathway; protein N(6)-(lipoyl)lysine from octanoyl-[acyl-carrier-protein]: step 1/2. In terms of biological role, catalyzes the transfer of endogenously produced octanoic acid from octanoyl-acyl-carrier-protein onto the lipoyl domains of lipoate-dependent enzymes. Lipoyl-ACP can also act as a substrate although octanoyl-ACP is likely to be the physiological substrate. The chain is Octanoyltransferase from Bartonella henselae (strain ATCC 49882 / DSM 28221 / CCUG 30454 / Houston 1) (Rochalimaea henselae).